A 244-amino-acid polypeptide reads, in one-letter code: Glucosamine-6-phosphate deaminase (244 aa).

Catalysis depends on aspartate 67, which acts as the Proton acceptor; for enolization step. Asparagine 136 serves as the catalytic For ring-opening step. Histidine 138 functions as the Proton acceptor; for ring-opening step in the catalytic mechanism. Glutamate 143 serves as the catalytic For ring-opening step.

Belongs to the glucosamine/galactosamine-6-phosphate isomerase family. NagB subfamily.

It carries out the reaction alpha-D-glucosamine 6-phosphate + H2O = beta-D-fructose 6-phosphate + NH4(+). Its pathway is amino-sugar metabolism; N-acetylneuraminate degradation; D-fructose 6-phosphate from N-acetylneuraminate: step 5/5. Its function is as follows. Catalyzes the reversible isomerization-deamination of glucosamine 6-phosphate (GlcN6P) to form fructose 6-phosphate (Fru6P) and ammonium ion. The polypeptide is Glucosamine-6-phosphate deaminase (Clostridium botulinum (strain 657 / Type Ba4)).